We begin with the raw amino-acid sequence, 218 residues long: Sulfite reductase, assimilatory-type (218 aa).

4 residues coordinate [4Fe-4S] cluster: Cys-91, Cys-97, Cys-131, and Cys-135. Residue Cys-135 coordinates siroheme.

Its function is as follows. This enzyme catalyzes the 6-electron reduction of sulfite to sulfide. This is one of several activities required for the biosynthesis of L-cysteine from sulfate. This Nitratidesulfovibrio vulgaris (strain ATCC 29579 / DSM 644 / CCUG 34227 / NCIMB 8303 / VKM B-1760 / Hildenborough) (Desulfovibrio vulgaris) protein is Sulfite reductase, assimilatory-type.